The following is a 131-amino-acid chain: Profilin-6 (131 aa).

An intrachain disulfide couples C13 to C115. An Involved in PIP2 interaction motif is present at residues 81 to 97; the sequence is AVIRGKKGSGGITVKKT. Residue T111 is modified to Phosphothreonine.

It belongs to the profilin family. In terms of assembly, occurs in many kinds of cells as a complex with monomeric actin in a 1:1 ratio. Phosphorylated by MAP kinases.

It localises to the cytoplasm. It is found in the cytoskeleton. Its function is as follows. Binds to actin and affects the structure of the cytoskeleton. At high concentrations, profilin prevents the polymerization of actin, whereas it enhances it at low concentrations. This Zea mays (Maize) protein is Profilin-6.